Here is a 328-residue protein sequence, read N- to C-terminus: Probable E3 ubiquitin-protein ligase RHC1A (328 aa).

Ser2 is subject to N-acetylserine. Residues 190–231 (CPVCKDEFELGSEAKQMPCNHIYHSDCIVPWLVQHNSCPVCR) form an RING-type; atypical zinc finger. The disordered stretch occupies residues 233–324 (ELPSASGPSS…QQSYMGYSGW (92 aa)). Residues 238 to 250 (SGPSSSQNRTTPT) show a composition bias toward polar residues. Low complexity-rich tracts occupy residues 251 to 266 (RNYR…NSRE) and 275 to 290 (FSSF…SSSS). Residues 291–300 (TQNRGGTRNS) are compositionally biased toward polar residues.

It carries out the reaction S-ubiquitinyl-[E2 ubiquitin-conjugating enzyme]-L-cysteine + [acceptor protein]-L-lysine = [E2 ubiquitin-conjugating enzyme]-L-cysteine + N(6)-ubiquitinyl-[acceptor protein]-L-lysine.. It participates in protein modification; protein ubiquitination. Functionally, probable E3 ubiquitin-protein ligase that may possess E3 ubiquitin ligase activity in vitro. This is Probable E3 ubiquitin-protein ligase RHC1A from Arabidopsis thaliana (Mouse-ear cress).